The following is a 577-amino-acid chain: Torulene dioxygenase (577 aa).

Residues H239, H291, H361, and H570 each contribute to the Fe(2+) site.

Belongs to the carotenoid oxygenase family. Requires Fe(2+) as cofactor.

Its subcellular location is the cytoplasm. It is found in the cytosol. It catalyses the reaction torulene + O2 = 4'-apo-beta-carotenal + 3-methyl-2-butenal. It functions in the pathway carotenoid biosynthesis. Functionally, torulene dioxygenase; part of the pathway that mediates the biosynthesis of neurosporaxanthin, a carboxylic apocarotenoid acting as an essential protective pigments and leading to orange pigmentation. CarT mediates the cleavage of torulene into beta-apo-4'-carotenal, the aldehyde corresponding to the acidic neurosporaxanthin. Is also active on other monocyclic synthetic substrates such as beta-apo-8'-carotenal and beta-apo-10'-carotenal to produce beta-apo-14'-carotenal and retinal(beta-apo-15'-carotenal), respectively. Neurosporaxanthin is synthesized from geranyl-geranyl pyrophosphate (GGPP) through several enzymatic activities. Phytoene synthase activity performed by the bifunctional enzyme carAR first produces phytoene from geranyl-geranyl pyrophosphate (GGPP). The phytoene dehydrogenase carB then introduces 4 desaturations to lead to lycopene which is substrate of the carotene cyclase activity of carAR that leads to the production of gamma-carotene. CarB then performs a 5th desaturation reaction to yield torulene. Torulene is the substrate of the dioxidase carT that breaks the molecule, removing five carbon atoms to yield beta-apo-4'-carotenal, whereas the aldehyde dehydrogenase carD mediates the last step by converting beta-apo-4'-carotenal into neurosporaxanthin. The sequence is that of Torulene dioxygenase from Fusarium fujikuroi (Bakanae and foot rot disease fungus).